Consider the following 283-residue polypeptide: Large ribosomal subunit protein uL2 (283 aa).

The segment at 215–283 (RHKGIRPTVR…IRGRKKRINN (69 aa)) is disordered. Residues 274–283 (IRGRKKRINN) are compositionally biased toward basic residues.

It belongs to the universal ribosomal protein uL2 family. Part of the 50S ribosomal subunit. Forms a bridge to the 30S subunit in the 70S ribosome.

Its function is as follows. One of the primary rRNA binding proteins. Required for association of the 30S and 50S subunits to form the 70S ribosome, for tRNA binding and peptide bond formation. It has been suggested to have peptidyltransferase activity; this is somewhat controversial. Makes several contacts with the 16S rRNA in the 70S ribosome. The polypeptide is Large ribosomal subunit protein uL2 (Mycoplasma mobile (strain ATCC 43663 / 163K / NCTC 11711) (Mesomycoplasma mobile)).